A 182-amino-acid chain; its full sequence is Small ribosomal subunit protein uS4 (182 aa).

2 disordered regions span residues 1-23 and 158-182; these read MGHP…ADRI and SSVA…KDEE. Residues 103 to 170 enclose the S4 RNA-binding domain; sequence RRLQSLVFKR…AKQFETQETE (68 aa). Acidic residues predominate over residues 167–182; that stretch reads QETEEVAAEEEPKDEE.

This sequence belongs to the universal ribosomal protein uS4 family. Part of the 30S ribosomal subunit. Contacts protein S5. The interaction surface between S4 and S5 is involved in control of translational fidelity.

Functionally, one of the primary rRNA binding proteins, it binds directly to 16S rRNA where it nucleates assembly of the body of the 30S subunit. Its function is as follows. With S5 and S12 plays an important role in translational accuracy. The polypeptide is Small ribosomal subunit protein uS4 (Methanosphaera stadtmanae (strain ATCC 43021 / DSM 3091 / JCM 11832 / MCB-3)).